Here is a 229-residue protein sequence, read N- to C-terminus: MIKAIVTDIEGTTSDIRFVHSVLFPYARERLADTVRQHGSDPEIAQALDALRQELSQPDADSETLIAALNQFMDEDRKSTALKLLQGIIWRAGYRNGDFQGHLYPEVAAQLAAWQQQGLRLYVYSSGSVEAQQLLFGYSNAGDLRPLFSDYFDTRVGAKRETDSYRTIAQAIGLPAEQLLFLSDIRQELDAAQEAGWHTCQLIRDDADSVSRHRQVARFDQIDLPEYAQ.

Belongs to the HAD-like hydrolase superfamily. MasA/MtnC family. Monomer. Mg(2+) serves as cofactor.

It carries out the reaction 5-methylsulfanyl-2,3-dioxopentyl phosphate + H2O = 1,2-dihydroxy-5-(methylsulfanyl)pent-1-en-3-one + phosphate. Its pathway is amino-acid biosynthesis; L-methionine biosynthesis via salvage pathway; L-methionine from S-methyl-5-thio-alpha-D-ribose 1-phosphate: step 3/6. It functions in the pathway amino-acid biosynthesis; L-methionine biosynthesis via salvage pathway; L-methionine from S-methyl-5-thio-alpha-D-ribose 1-phosphate: step 4/6. Its function is as follows. Bifunctional enzyme that catalyzes the enolization of 2,3-diketo-5-methylthiopentyl-1-phosphate (DK-MTP-1-P) into the intermediate 2-hydroxy-3-keto-5-methylthiopentenyl-1-phosphate (HK-MTPenyl-1-P), which is then dephosphorylated to form the acireductone 1,2-dihydroxy-3-keto-5-methylthiopentene (DHK-MTPene). This chain is Enolase-phosphatase E1, found in Pectobacterium carotovorum subsp. carotovorum (strain PC1).